Reading from the N-terminus, the 367-residue chain is 4-hydroxy-3-methylbut-2-en-1-yl diphosphate synthase (flavodoxin) (367 aa).

Residues Cys270, Cys273, Cys305, and Glu312 each contribute to the [4Fe-4S] cluster site.

Belongs to the IspG family. It depends on [4Fe-4S] cluster as a cofactor.

The enzyme catalyses (2E)-4-hydroxy-3-methylbut-2-enyl diphosphate + oxidized [flavodoxin] + H2O + 2 H(+) = 2-C-methyl-D-erythritol 2,4-cyclic diphosphate + reduced [flavodoxin]. The protein operates within isoprenoid biosynthesis; isopentenyl diphosphate biosynthesis via DXP pathway; isopentenyl diphosphate from 1-deoxy-D-xylulose 5-phosphate: step 5/6. In terms of biological role, converts 2C-methyl-D-erythritol 2,4-cyclodiphosphate (ME-2,4cPP) into 1-hydroxy-2-methyl-2-(E)-butenyl 4-diphosphate. The chain is 4-hydroxy-3-methylbut-2-en-1-yl diphosphate synthase (flavodoxin) from Buchnera aphidicola subsp. Schizaphis graminum (strain Sg).